The chain runs to 55 residues: Large ribosomal subunit protein bL33 (55 aa).

It belongs to the bacterial ribosomal protein bL33 family.

The polypeptide is Large ribosomal subunit protein bL33 (Bordetella avium (strain 197N)).